Reading from the N-terminus, the 465-residue chain is UDP-N-acetylmuramate--L-alanine ligase (465 aa).

Position 112–118 (112–118 (GTHGKTT)) interacts with ATP.

This sequence belongs to the MurCDEF family.

It localises to the cytoplasm. It catalyses the reaction UDP-N-acetyl-alpha-D-muramate + L-alanine + ATP = UDP-N-acetyl-alpha-D-muramoyl-L-alanine + ADP + phosphate + H(+). It participates in cell wall biogenesis; peptidoglycan biosynthesis. In terms of biological role, cell wall formation. The polypeptide is UDP-N-acetylmuramate--L-alanine ligase (Burkholderia vietnamiensis (strain G4 / LMG 22486) (Burkholderia cepacia (strain R1808))).